Here is a 1364-residue protein sequence, read N- to C-terminus: Outer kinetochore KNL1 complex subunit spc7 (1364 aa).

Residues 1–15 (MPTSPRRNSIATTDN) show a composition bias toward polar residues. Disordered stretches follow at residues 1-36 (MPTS…GALQ), 124-190 (YPKD…DIAS), and 202-223 (EALN…LSIQ). Residues 124–136 (YPKDHQSDSEKST) show a composition bias toward basic and acidic residues. The span at 157 to 169 (GPTTTSFSRNETQ) shows a compositional bias: polar residues. Residues 170 to 181 (SSPHSHSASIIS) show a composition bias toward low complexity. The short motif at 254–257 (MDLT) is the MELT; degenerate element. The residue at position 257 (Thr-257) is a Phosphothreonine; by mph1. Residues 289-334 (ASHDPSNQTQLSSPNKSSSPTSIEISDFSKNNENHDQSENKEEEED) form a disordered region. The span at 300–310 (SSPNKSSSPTS) shows a compositional bias: low complexity. Residues 318–328 (KNNENHDQSEN) are compositionally biased toward basic and acidic residues. An MELT; degenerate motif is present at residues 450–453 (MDLT). Thr-453 bears the Phosphothreonine; by mph1 mark. The tract at residues 456–503 (ISSTNAPTHLNEDDLNQFTSNISSSSKPRKDNNKTANSSKPIPDSEDF) is disordered. Residues 471 to 481 (NQFTSNISSSS) show a composition bias toward polar residues. Residues 504 to 507 (MDIT) carry the MELT; degenerate motif. Thr-507 bears the Phosphothreonine; by mph1 mark. 2 disordered regions span residues 564-643 (LPSA…SSFD) and 697-837 (GATP…GVSN). The span at 566–585 (SADKENAEREEIPSYSDKSE) shows a compositional bias: basic and acidic residues. The span at 586 to 617 (NFNTTSFTNHERSPNGNNNLKFSKDPNSSSPS) shows a compositional bias: polar residues. A compositionally biased stretch (basic and acidic residues) spans 719 to 730 (EVSRQPTDDKGE). The span at 747-773 (LTIQQTNEIKHVPTNTTSSVKLPQQPS) shows a compositional bias: polar residues. Residues 791–802 (SLERLESQEPNR) show a composition bias toward basic and acidic residues. The span at 808-820 (VGSSNAGNTTSVG) shows a compositional bias: polar residues. A coiled-coil region spans residues 1075 to 1155 (LAQAQEKLEK…EEQLLNLKNE (81 aa)). Positions 1091–1105 (RRRRLLSEKEERRKE) match the Nuclear localization signal motif.

In terms of assembly, component of the KNL1/SPC105 complex composed of at least spc7 and sos7. Part of the outer kinetochore KMN network that includes the KNL1, MIS12 and NDC80 complexes. Interacts (via C-terminus) with sos7 (via C-terminus); the interaction is direct. Interacts (when phosphorylated on MELT motifs) with bub1 and bub3; to recruit the BUB1-BUB3 complex to the kinetochore. Phosphorylation of threonine residues in the MELT motifs by mph1/mps1 leads to recruitment of bub1 and bub3 to the kinetochore, and is required to maintain spindle assembly checkpoint signaling.

It localises to the nucleus. The protein localises to the chromosome. The protein resides in the centromere. Its subcellular location is the kinetochore. In terms of biological role, acts as a component of the outer kinetochore KNL1 complex that serves as a docking point for spindle assembly checkpoint components and mediates microtubule-kinetochore interactions. Kinetochores, consisting of a centromere-associated inner segment and a microtubule-contacting outer segment, play a crucial role in chromosome segregation by mediating the physical connection between centromeric DNA and spindle microtubules. The outer kinetochore is made up of the ten-subunit KMN network, comprising the MIS12, NDC80 and KNL1 complexes, and auxiliary microtubule-associated components; together they connect the outer kinetochore with the inner kinetochore, bind microtubules, and mediate interactions with mitotic checkpoint proteins that delay anaphase until chromosomes are bioriented on the spindle. Recruits the BUB1-BUB3 complex to kinetochores when phosphorylated by mph1/mps1, to support spindle assembly checkpoint signaling. Functions both in mitotic and in meiotic chromosome segregation. This is Outer kinetochore KNL1 complex subunit spc7 from Schizosaccharomyces pombe (strain 972 / ATCC 24843) (Fission yeast).